A 601-amino-acid polypeptide reads, in one-letter code: Aspartate--tRNA ligase (601 aa).

Glutamate 183 serves as a coordination point for L-aspartate. Positions 207-210 (QIFK) are aspartate. Arginine 229 contributes to the L-aspartate binding site. ATP is bound by residues 229 to 231 (RDE) and glutamine 238. Histidine 457 contributes to the L-aspartate binding site. Glutamate 497 contacts ATP. Arginine 504 is an L-aspartate binding site. 549 to 552 (GIDR) serves as a coordination point for ATP.

It belongs to the class-II aminoacyl-tRNA synthetase family. Type 1 subfamily. Homodimer.

The protein localises to the cytoplasm. It carries out the reaction tRNA(Asp) + L-aspartate + ATP = L-aspartyl-tRNA(Asp) + AMP + diphosphate. Functionally, catalyzes the attachment of L-aspartate to tRNA(Asp) in a two-step reaction: L-aspartate is first activated by ATP to form Asp-AMP and then transferred to the acceptor end of tRNA(Asp). In Leptospira interrogans serogroup Icterohaemorrhagiae serovar Lai (strain 56601), this protein is Aspartate--tRNA ligase.